A 1268-amino-acid polypeptide reads, in one-letter code: SR-related and CTD-associated factor 8 (1268 aa).

In terms of domain architecture, CID spans 1 to 139 (MEAVKTFNSE…PLLDMAAGIP (139 aa)). T6 is modified (phosphothreonine). K18 participates in a covalent cross-link: Glycyl lysine isopeptide (Lys-Gly) (interchain with G-Cter in SUMO1). The residue at position 273 (S273) is a Phosphoserine. Disordered regions lie at residues 322-355 (QQQPQKVTPQDSQEGAFGSEHSASPSQGSSQQHF) and 385-469 (EIFE…PVRS). Residues 342 to 354 (HSASPSQGSSQQH) are compositionally biased toward polar residues. Over residues 394–443 (VAVRSRSRTHSRSRSRSPRKRRSRSRSGSRKRKHRKRSRSRSRERKRKSS) the composition is skewed to basic residues. Basic and acidic residues predominate over residues 447–461 (SSERRAREREKERQK). The RRM domain maps to 477-551 (TTLWVGQVDK…KVIKIAWALN (75 aa)). T615 carries the phosphothreonine modification. Phosphoserine is present on S617. The disordered stretch occupies residues 753–808 (AGNVFNPPSKAEPEEKVPHLTEHQIPSGENTRPVIPSDIPSSAPMLAQPPGASNTS). The segment covering 763 to 774 (AEPEEKVPHLTE) has biased composition (basic and acidic residues). Asymmetric dimethylarginine is present on residues R915, R925, and R936. A disordered region spans residues 947–1063 (QRGIPPPSVL…GRDHFGRPPV (117 aa)). Pro residues predominate over residues 961–970 (HPPPRGPFPP). Basic and acidic residues-rich tracts occupy residues 1009–1025 (EGDRDYRFPPIETREGI) and 1032–1063 (DVRDVVGRPIDPREGPGRPPLDGRDHFGRPPV). The residue at position 1071 (R1071) is an Asymmetric dimethylarginine. Residues 1199 to 1268 (ATSQRKGENV…VVESTETEGT (70 aa)) form a disordered region. Residues 1249-1262 (GTAAGVESEAVVES) show a composition bias toward low complexity.

In terms of assembly, interacts with POLR2A; via C-terminal heptapeptide repeat domain (CTD) phosphorylated at 'Ser-2' and 'Ser-5'. Identified in a complex with CDC5L and other spliceosomal proteins.

It is found in the nucleus. Its subcellular location is the nucleus matrix. Its function is as follows. Anti-terminator protein required to prevent early mRNA termination during transcription. Together with SCAF4, acts by suppressing the use of early, alternative poly(A) sites, thereby preventing the accumulation of non-functional truncated proteins. Mechanistically, associates with the phosphorylated C-terminal heptapeptide repeat domain (CTD) of the largest RNA polymerase II subunit (POLR2A), and subsequently binds nascent RNA upstream of early polyadenylation sites to prevent premature mRNA transcript cleavage and polyadenylation. Independently of SCAF4, also acts as a positive regulator of transcript elongation. The protein is SR-related and CTD-associated factor 8 of Rattus norvegicus (Rat).